Consider the following 237-residue polypeptide: U2 small nuclear ribonucleoprotein A' (237 aa).

LRR repeat units lie at residues 53 to 74, 75 to 95, and 97 to 118; these read RTNI…GHND, TVHT…SRLP, and YLVN…QGLR. The region spanning 132-170 is the LRRCT domain; the sequence is NVICHKEQYRETVIALCPQLAVLDGERVRQAERQAAPQN. Positions 161 to 182 are disordered; it reads QAERQAAPQNEKTDTPTEGPQP.

This sequence belongs to the U2 small nuclear ribonucleoprotein A family. In terms of assembly, associated with the spliceosome.

It is found in the nucleus. Its function is as follows. Involved in pre-mRNA splicing. The protein is U2 small nuclear ribonucleoprotein A' (LEA1) of Eremothecium gossypii (strain ATCC 10895 / CBS 109.51 / FGSC 9923 / NRRL Y-1056) (Yeast).